Here is a 344-residue protein sequence, read N- to C-terminus: Heat-inducible transcription repressor HrcA (344 aa).

It belongs to the HrcA family.

Functionally, negative regulator of class I heat shock genes (grpE-dnaK-dnaJ and groELS operons). Prevents heat-shock induction of these operons. The polypeptide is Heat-inducible transcription repressor HrcA (Geobacillus stearothermophilus (Bacillus stearothermophilus)).